The following is a 326-amino-acid chain: o-succinylbenzoate synthase (326 aa).

The active-site Proton donor is K110. 3 residues coordinate Mg(2+): D138, E165, and D188. Catalysis depends on K212, which acts as the Proton acceptor.

The protein belongs to the mandelate racemase/muconate lactonizing enzyme family. MenC type 1 subfamily. It depends on a divalent metal cation as a cofactor.

The enzyme catalyses (1R,6R)-6-hydroxy-2-succinyl-cyclohexa-2,4-diene-1-carboxylate = 2-succinylbenzoate + H2O. It participates in quinol/quinone metabolism; 1,4-dihydroxy-2-naphthoate biosynthesis; 1,4-dihydroxy-2-naphthoate from chorismate: step 4/7. The protein operates within quinol/quinone metabolism; menaquinone biosynthesis. Its function is as follows. Converts 2-succinyl-6-hydroxy-2,4-cyclohexadiene-1-carboxylate (SHCHC) to 2-succinylbenzoate (OSB). The sequence is that of o-succinylbenzoate synthase from Mycobacterium bovis (strain ATCC BAA-935 / AF2122/97).